Here is a 316-residue protein sequence, read N- to C-terminus: uncharacterized protein (316 aa).

In terms of domain architecture, S4 RNA-binding spans 26–98; that stretch reads ERIDRFLAGA…IPLDVVYEDA (73 aa). Asp-148 is an active-site residue.

The protein belongs to the pseudouridine synthase RluA family.

It catalyses the reaction a uridine in RNA = a pseudouridine in RNA. This is an uncharacterized protein from Chloroflexus aurantiacus (strain ATCC 29366 / DSM 635 / J-10-fl).